We begin with the raw amino-acid sequence, 419 residues long: Creatine kinase S-type, mitochondrial (419 aa).

A mitochondrion-targeting transit peptide spans 1-39 (MASIFSKLLTGRNASLLFATMGTSVLTTGYLLNRQKVCA). The tract at residues 40–64 (EVREQPRLFPPSADYPDLRKHNNCM) is cardiolipin-binding. In terms of domain architecture, Phosphagen kinase N-terminal spans 46 to 132 (RLFPPSADYP…FDPVIKLRHN (87 aa)). One can recognise a Phosphagen kinase C-terminal domain in the interval 159-401 (YVLSSRVRTG…NYLVDCEKKL (243 aa)). ATP is bound by residues 162-166 (SSRVR) and His225. Residue Tyr255 is modified to Phosphotyrosine. ATP-binding positions include Arg270, Arg326, 354–359 (RGTGGV), and Asp369. Residue Thr356 is modified to Phosphothreonine.

The protein belongs to the ATP:guanido phosphotransferase family. As to quaternary structure, exists as an octamer composed of four CKMT2 homodimers. In terms of tissue distribution, sarcomere-specific. Found only in heart and skeletal muscles.

It is found in the mitochondrion inner membrane. It catalyses the reaction creatine + ATP = N-phosphocreatine + ADP + H(+). Functionally, reversibly catalyzes the transfer of phosphate between ATP and various phosphogens (e.g. creatine phosphate). Creatine kinase isoenzymes play a central role in energy transduction in tissues with large, fluctuating energy demands, such as skeletal muscle, heart, brain and spermatozoa. The chain is Creatine kinase S-type, mitochondrial (CKMT2) from Homo sapiens (Human).